We begin with the raw amino-acid sequence, 352 residues long: Glutamine synthetase (352 aa).

The GS beta-grasp domain maps to 3-82 (YQAEYIWIDG…LCEVQLTDFT (80 aa)). Residues 87-352 (TRAAALGVAE…TTPAPAEASV (266 aa)) form the GS catalytic domain. The Mg(2+) site is built by glutamate 108 and glutamate 110. Position 164 (glutamate 164) interacts with ATP. Mg(2+) contacts are provided by glutamate 169 and glutamate 176. L-glutamate is bound at residue glutamate 272.

Belongs to the glutamine synthetase family. As to quaternary structure, homooctamer and homotetramer. It depends on Mg(2+) as a cofactor.

The protein resides in the cytoplasm. It carries out the reaction L-glutamate + NH4(+) + ATP = L-glutamine + ADP + phosphate + H(+). In terms of biological role, catalyzes the ATP-dependent biosynthesis of glutamine from glutamate and ammonia. This chain is Glutamine synthetase, found in Frankia alni.